Reading from the N-terminus, the 854-residue chain is MSQKELAALVATRTSRKRTISSTSFSISTRTDPKSIIEIHIFNDSLPIKRACCEVENPTLKAEQRVQQEEESLGQVPPLTEEEQQRHDEFRNSGSIFLQDLPCFKLQQAQPIAGSSPIPKCRECRRRNLATTEGEPSSVSDVYCRFYEFRRLQFNENGELCVVGFPNPYSEPSPEDIAIWQPDKNTPPTSGYMDIQVCRYILLHAGDQFCYIWHQEAEALSLHQNTDGTIAWKKAVKGTREICDVCDTTLFNYHWTCRKCGFGVCLDCVKDRKEGLRLRRAENAAQKGCDEYHWLLCSDPSGPQEHVLTELMLTQIIAGDALNVLGRLLHEVRTLWQVPQVCGCLLSKQAIEDAQSKEVIQDMIKESQLKQHTSYSSLASEQKVHQQQRLDQLHATKLEFARELGVDYVPGRVWTKETLGKDPITTAFDNLKHINFLRKGLAGLRRFLPPRTMTFAYSTQLAPGVPHEFLCDGRLLRLTDAMHPDNRVLFQEVWKCGQPVMISEVARSLNLDLWHPQAFCRDFGDKPNDLINCLNGNLVPNQPMRHFWEGFQCMTKRLPDAYGKPMLLKLKDWPPGDDFAEILPTRFADLMKGLPMPEYTLRTGNLNIASCLPKMFVPPDLGPKMYNAYGSALHPDKGTTNLHLDISDAVNIMVYVGIPQDGDTRPQMAATQKAIEIGGCDYITRARCQSPDVLPGALWHIFPARDADKIRDLLNRVTLEKGFRLEPDHDPIHDQNWYLDDKLRARLFKEYGVEGHPIVQCLGDAVFIPAGAPHQVQNLHNCIKVAEDFVSPENITHCYHLTHEFRRLSHSHTNHEDKLQIKNIIYHAIKDCCTILTRAVDERLNAELTKLNAD.

Positions 64-88 (QRVQQEEESLGQVPPLTEEEQQRHD) are disordered. Positions 601 to 806 (LRTGNLNIAS…HCYHLTHEFR (206 aa)) constitute a JmjC domain. Residues His-643, Asp-645, and His-774 each contribute to the Fe cation site.

This sequence belongs to the JHDM2-like histone demethylase family. Fe(2+) is required as a cofactor. Expressed in neurons close to the dorsal lateral neurons involved in circadian rhythm.

Its subcellular location is the nucleus. It localises to the cytoplasm. It catalyses the reaction N(6),N(6)-dimethyl-L-lysyl(9)-[histone H3] + 2 2-oxoglutarate + 2 O2 = L-lysyl(9)-[histone H3] + 2 formaldehyde + 2 succinate + 2 CO2. In terms of biological role, histone demethylase that specifically demethylates 'Lys-10' of histone H3 (H3K9), thereby playing a central role in histone code. Demethylation of Lys residue generates formaldehyde and succinate. Probably involved in regulation of chromatin structure, promoting expansion of euchromatin. Negatively regulates rhino-dependent piRNA production capacity of several genomic regions; may help define the frontiers of piRNA clusters by regulating histone methylation levels. May be involved in regulation of behavior and circadian rhythms. The polypeptide is Lysine-specific demethylase 3 (Drosophila melanogaster (Fruit fly)).